Here is a 469-residue protein sequence, read N- to C-terminus: Cysteine protease ATG4D (469 aa).

Positions 1–29 (MNSVSPLATQYGSPKGSQQMENRSTQSGG) are enriched in polar residues. Residues 1-41 (MNSVSPLATQYGSPKGSQQMENRSTQSGGHEQRKMGHQDAT) form a disordered region. Residue Cys131 is the Nucleophile of the active site. The interval 169 to 191 (IRSSSPPSMPLSSLATGHSAGDY) is disordered. The segment covering 171–182 (SSSPPSMPLSSL) has biased composition (low complexity). Catalysis depends on residues Asp356 and His358. Residues 436-469 (QEYAEGPQSSSHPPVCRKKGPLVKRPSSDEFEFL) form a disordered region.

It belongs to the peptidase C54 family.

The protein localises to the cytoplasm. The catalysed reaction is [protein]-C-terminal L-amino acid-glycyl-phosphatidylethanolamide + H2O = [protein]-C-terminal L-amino acid-glycine + a 1,2-diacyl-sn-glycero-3-phosphoethanolamine. The enzyme catalyses [protein]-C-terminal L-amino acid-glycyl-phosphatidylserine + H2O = [protein]-C-terminal L-amino acid-glycine + a 1,2-diacyl-sn-glycero-3-phospho-L-serine. Cysteine protease that plays a key role in autophagy by mediating both proteolytic activation and delipidation of ATG8 family proteins. The protease activity is required for proteolytic activation of ATG8 family proteins to reveal a C-terminal glycine. Exposure of the glycine at the C-terminus is essential for ATG8 proteins conjugation to phosphatidylethanolamine (PE) and insertion to membranes, which is necessary for autophagy. In addition to the protease activity, also mediates delipidation of ATG8 family proteins. Catalyzes delipidation of PE-conjugated forms of ATG8 proteins during macroautophagy. Also involved in non-canonical autophagy, a parallel pathway involving conjugation of ATG8 proteins to single membranes at endolysosomal compartments, by catalyzing delipidation of ATG8 proteins conjugated to phosphatidylserine (PS). The sequence is that of Cysteine protease ATG4D from Xenopus laevis (African clawed frog).